The following is a 173-amino-acid chain: Dual-action ribosomal maturation protein DarP (173 aa).

It belongs to the DarP family.

It is found in the cytoplasm. In terms of biological role, member of a network of 50S ribosomal subunit biogenesis factors which assembles along the 30S-50S interface, preventing incorrect 23S rRNA structures from forming. Promotes peptidyl transferase center (PTC) maturation. The polypeptide is Dual-action ribosomal maturation protein DarP (Pseudomonas syringae pv. tomato (strain ATCC BAA-871 / DC3000)).